A 78-amino-acid chain; its full sequence is Mu-conotoxin BuIIIB (78 aa).

Positions 1-22 are cleaved as a signal peptide; it reads MMSKLGVLLTICLLLFPLFALP. A propeptide spanning residues 23-51 is cleaved from the precursor; the sequence is QDGDQPADRPAERMQDDISSEQNPLLEKR. Residues 26–46 form a disordered region; it reads DQPADRPAERMQDDISSEQNP. Residues 28 to 38 are compositionally biased toward basic and acidic residues; the sequence is PADRPAERMQD. Disulfide bonds link Cys-56-Cys-68, Cys-57-Cys-74, and Cys-64-Cys-75. Residue Cys-75 is modified to Cysteine amide.

It belongs to the conotoxin M superfamily. As to expression, expressed by the venom duct.

It localises to the secreted. Mu-conotoxins block voltage-gated sodium channels (Nav). This synthetic toxin potently blocks rNav1.4/SCN4A (Kd=0.34-3.6 nM), rNav1.2/SCN2A (Kd=13 nM), rNav1.3/SCN3A (Kd=200 nM), rNav1.1/SCN1A (Kd=360 nM), mNav1.6/SCN8A (IC(50)=1.8 uM), rNav1.5/SCN5A (IC(50)=9 uM), rNav1.6/SCN8A (IC(50)&gt;30 uM). It is noteworthy that the toxin is 50-fold more potent on mouse Nav1.6 than on rat Nav1.6. The block of SCN4A is very slowly reversible. The sequence is that of Mu-conotoxin BuIIIB from Conus bullatus (Bubble cone).